The chain runs to 759 residues: Cullin-4A (759 aa).

K8 is covalently cross-linked (Glycyl lysine isopeptide (Lys-Gly) (interchain with G-Cter in SUMO2)). Phosphoserine is present on S10. K33 is covalently cross-linked (Glycyl lysine isopeptide (Lys-Gly) (interchain with G-Cter in ubiquitin)). Positions 691 to 751 constitute a Cullin neddylation domain; the sequence is DRQYQIDAAI…RDYMERDKDN (61 aa). K705 participates in a covalent cross-link: Glycyl lysine isopeptide (Lys-Gly) (interchain with G-Cter in NEDD8).

Belongs to the cullin family. As to quaternary structure, can self-associate. Component of multiple DCX (DDB1-CUL4-X-box) E3 ubiquitin-protein ligase complexes that seem to consist of DDB1, CUL4A or CUL4B, RBX1 and a variable substrate recognition component which seems to belong to a protein family described as DCAF (Ddb1- and Cul4-associated factor) or CDW (CUL4-DDB1-associated WD40-repeat) proteins. Component of the CSA complex (DCX(ERCC8) complex) containing ERCC8, RBX1, DDB1 and CUL4A; the CSA complex interacts with RNA polymerase II; upon UV irradiation it interacts with the COP9 signalosome and preferentially with the hyperphosphorylated form of RNA polymerase II. Component of the DCX(DET1-COP1) complex with the substrate recognition component DET1 and COP1. Component of the DCX(DDB2) complex with the substrate recognition component DDB2. Component of the DCX(DTL) complex with the putative substrate recognition component DTL. Component of DCX complexes part of the DesCEND (destruction via C-end degrons) pathway, which contain either TRPC4AP or DCAF12 as substrate-recognition component. Component of the DCX(AMBRA1) complex with the substrate recognition component AMBRA1. Interacts with DDB1, RBX1, RNF7, CDT1, TIP120A/CAND1, SKP2, CDKN1B, MDM2, TP53 and HOXA9. Interacts with DDB2; the interactions with DDB2 and CAND1 are mutually exclusive. Interacts with DCAF1, DTL, DDA1, DCAF6, DCAF4, DCAF16, DCAF17, DET1, WDTC1, DCAF5, DCAF11, WDR24A, COP1, PAFAH1B1, ERCC8, GRWD1, FBXW5, RBBP7, GNB2, WSB1, WSB2, NUP43, PWP1, FBXW8, ATG16L1, KATNB1, RBBP4, RBBP5, LRWD1 and DCAF8. May interact with WDR26, WDR51B, SNRNP40, WDR61, WDR76, WDR5. Interacts (when neddylated) with ARIH1; leading to activate the E3 ligase activity of ARIH1. The DDB1-CUL4A complex interacts with CRY1. Interacts (unneddylated form) with DCUN1D1, DCUN1D2, DCUN1D3, DCUN1D4 and DCUN1D5; these interactions promote the cullin neddylation. (Microbial infection) Interacts with Epstein-Barr virus BPLF1. In terms of processing, neddylated; required for activity of cullin-RING-based E3 ubiquitin-protein ligase complexes. Deneddylated via its interaction with the COP9 signalosome (CSN) complex. (Microbial infection) Deneddylated by Epstein-Barr virus BPLF1 leading to a S-phase-like environment that is required for efficient replication of the viral genome.

It functions in the pathway protein modification; protein ubiquitination. In terms of biological role, core component of multiple cullin-RING-based E3 ubiquitin-protein ligase complexes which mediate the ubiquitination of target proteins. As a scaffold protein may contribute to catalysis through positioning of the substrate and the ubiquitin-conjugating enzyme. The E3 ubiquitin-protein ligase activity of the complex is dependent on the neddylation of the cullin subunit and is inhibited by the association of the deneddylated cullin subunit with TIP120A/CAND1. The functional specificity of the E3 ubiquitin-protein ligase complex depends on the variable substrate recognition component. DCX(DET1-COP1) directs ubiquitination of JUN. DCX(DDB2) directs ubiquitination of XPC. DCX(DDB2) ubiquitinates histones H3-H4 and is required for efficient histone deposition during replication-coupled (H3.1) and replication-independent (H3.3) nucleosome assembly, probably by facilitating the transfer of H3 from ASF1A/ASF1B to other chaperones involved in histone deposition. DCX(DTL) plays a role in PCNA-dependent polyubiquitination of CDT1 and MDM2-dependent ubiquitination of p53/TP53 in response to radiation-induced DNA damage and during DNA replication. DCX(DTL) directs autoubiquitination of DTL. In association with DDB1 and SKP2 probably is involved in ubiquitination of CDKN1B/p27kip. Is involved in ubiquitination of HOXA9. The DDB1-CUL4A-DTL E3 ligase complex regulates the circadian clock function by mediating the ubiquitination and degradation of CRY1. The DCX(ERCC8) complex (also named CSA complex) plays a role in transcription-coupled repair (TCR). A number of DCX complexes (containing either TRPC4AP or DCAF12 as substrate-recognition component) are part of the DesCEND (destruction via C-end degrons) pathway, which recognizes a C-degron located at the extreme C terminus of target proteins, leading to their ubiquitination and degradation. The DCX(AMBRA1) complex is a master regulator of the transition from G1 to S cell phase by mediating ubiquitination of phosphorylated cyclin-D (CCND1, CCND2 and CCND3). The DCX(AMBRA1) complex also acts as a regulator of Cul5-RING (CRL5) E3 ubiquitin-protein ligase complexes by mediating ubiquitination and degradation of Elongin-C (ELOC) component of CRL5 complexes. With CUL4B, contributes to ribosome biogenesis. The chain is Cullin-4A from Homo sapiens (Human).